A 118-amino-acid chain; its full sequence is Large ribosomal subunit protein bL20 (118 aa).

This sequence belongs to the bacterial ribosomal protein bL20 family.

In terms of biological role, binds directly to 23S ribosomal RNA and is necessary for the in vitro assembly process of the 50S ribosomal subunit. It is not involved in the protein synthesizing functions of that subunit. The protein is Large ribosomal subunit protein bL20 of Thermosipho melanesiensis (strain DSM 12029 / CIP 104789 / BI429).